The chain runs to 434 residues: Enolase (434 aa).

Gln163 lines the (2R)-2-phosphoglycerate pocket. The Proton donor role is filled by Glu205. The Mg(2+) site is built by Asp242, Glu289, and Asp316. Positions 341, 370, 371, and 392 each coordinate (2R)-2-phosphoglycerate. Catalysis depends on Lys341, which acts as the Proton acceptor.

The protein belongs to the enolase family. Requires Mg(2+) as cofactor.

Its subcellular location is the cytoplasm. The protein resides in the secreted. It is found in the cell surface. The enzyme catalyses (2R)-2-phosphoglycerate = phosphoenolpyruvate + H2O. It participates in carbohydrate degradation; glycolysis; pyruvate from D-glyceraldehyde 3-phosphate: step 4/5. Catalyzes the reversible conversion of 2-phosphoglycerate (2-PG) into phosphoenolpyruvate (PEP). It is essential for the degradation of carbohydrates via glycolysis. The sequence is that of Enolase from Lacticaseibacillus paracasei (strain ATCC 334 / BCRC 17002 / CCUG 31169 / CIP 107868 / KCTC 3260 / NRRL B-441) (Lactobacillus paracasei).